The sequence spans 260 residues: Carbonic anhydrase 2 (260 aa).

Positions 3–259 constitute an Alpha-carbonic anhydrase domain; it reads HHWGYDSHNG…LKSREVRASF (257 aa). H64 functions as the Proton donor/acceptor in the catalytic mechanism. Zn(2+) contacts are provided by H94, H96, and H119. 198 to 199 provides a ligand contact to substrate; it reads TT.

Belongs to the alpha-carbonic anhydrase family. Zn(2+) serves as cofactor.

It localises to the cytoplasm. The protein resides in the cell membrane. The enzyme catalyses hydrogencarbonate + H(+) = CO2 + H2O. It carries out the reaction urea = cyanamide + H2O. Its activity is regulated as follows. Inhibited by acetazolamide. Its function is as follows. Catalyzes the reversible hydration of carbon dioxide. Can also hydrate cyanamide to urea. The sequence is that of Carbonic anhydrase 2 (CA2) from Gallus gallus (Chicken).